Here is a 287-residue protein sequence, read N- to C-terminus: Diphthine methyl ester synthase (287 aa).

S-adenosyl-L-methionine-binding positions include Leu-9, Asp-84, Gly-87, 112-113, Val-163, Val-221, and His-248; that span reads SI.

The protein belongs to the diphthine synthase family.

It localises to the cytoplasm. It carries out the reaction 2-[(3S)-amino-3-carboxypropyl]-L-histidyl-[translation elongation factor 2] + 4 S-adenosyl-L-methionine = diphthine methyl ester-[translation elongation factor 2] + 4 S-adenosyl-L-homocysteine + 3 H(+). It participates in protein modification; peptidyl-diphthamide biosynthesis. Its function is as follows. S-adenosyl-L-methionine-dependent methyltransferase that catalyzes four methylations of the modified target histidine residue in translation elongation factor 2 (EF-2), to form an intermediate called diphthine methyl ester. The four successive methylation reactions represent the second step of diphthamide biosynthesis. This chain is Diphthine methyl ester synthase (DPH5), found in Gibberella zeae (strain ATCC MYA-4620 / CBS 123657 / FGSC 9075 / NRRL 31084 / PH-1) (Wheat head blight fungus).